Consider the following 538-residue polypeptide: Cytochrome P450 monooxygenase fogE (538 aa).

The helical transmembrane segment at 4–24 threads the bilayer; the sequence is ASSAILLVALIAALWRLSLIG. Cys-437 is a binding site for heme.

This sequence belongs to the cytochrome P450 family. Heme is required as a cofactor.

The protein resides in the membrane. It functions in the pathway secondary metabolite biosynthesis. Cytochrome P450 monooxygenase; part of the gene cluster that mediates the biosynthesis of flavoglaucin and congeners (including aspergin, dihydroauroglaucin and auroglaucin), prenylated salicylaldehyde derivatives carrying a saturated or an unsaturated C-7 side chain. The PKS fogA releases the carboxylic acid (8E,10E,12E)-3,5,7-trihydroxytetradeca-8,10,12-trienoic acid as its product, as well as derivatives with one and two double bonds. FogA is indeed able to reduce the initial triketide, thus being at least partially responsible for the differently saturated heptyl side chains of flavoglaucin congeners. The oxidoreductases fogB, fogC and fogD modify the nascent polyketide in fogA-bound form and, together, fogA, fogB, fogC and fogD are necessary for the formation of the aromatic core and the cyclized PKS products are released as salicyl alcohols. In particular, fogB is responsible for oxidation of a hydroxyl group or reduction of remaining double bond(s) at the C-7 residue whereas fogD is probably involved in the reductive release of the modified PKS products. The cytochrome P450 monooxygenase fogE is then responsible for the hydroxylation at C-3 of the benzene ring. The fogE products are substrates of the prenyltransferase fogH and the prenylated benzyl alcohols are subsequently oxidized by the fogF to produce the final aryl aldehydes flavoglaucin and congeners. The short-chain dehydrogenase fogG does not seem to be involved in the biosynthesis of the prenylated salicylaldehyde derivatives. In Aspergillus ruber (strain CBS 135680), this protein is Cytochrome P450 monooxygenase fogE.